The primary structure comprises 362 residues: Class I histocompatibility antigen, Gogo-B*0101 alpha chain (362 aa).

Residues 1–24 (MRVTAPRTLLLLLSAALALTETWA) form the signal peptide. Positions 25–114 (GSHSMRYFDT…ALRYYNQSEA (90 aa)) are alpha-1. Topologically, residues 25–308 (GSHSMRYFDT…EPSSQSTIPI (284 aa)) are extracellular. Asn110 is a glycosylation site (N-linked (GlcNAc...) asparagine). An alpha-2 region spans residues 115-206 (GSHTIQRMFG…ENGRETLQRA (92 aa)). 2 disulfides stabilise this stretch: Cys125–Cys188 and Cys227–Cys283. An alpha-3 region spans residues 207–298 (DTPKTHVTHH…GLPKPLTLRW (92 aa)). An Ig-like C1-type domain is found at 209–295 (PKTHVTHHPI…QHEGLPKPLT (87 aa)). A connecting peptide region spans residues 299 to 308 (EPSSQSTIPI). Residues 309 to 332 (VGIVAGLAVLAVVVIGAVVTAVIC) form a helical membrane-spanning segment. Residues 333–362 (RRKSSGGKGGSYSQAASSDSAQGSDVSLTA) lie on the Cytoplasmic side of the membrane. A disordered region spans residues 335 to 362 (KSSGGKGGSYSQAASSDSAQGSDVSLTA). The segment covering 343–362 (SYSQAASSDSAQGSDVSLTA) has biased composition (low complexity). A phosphoserine mark is found at Ser356 and Ser359.

This sequence belongs to the MHC class I family. Heterodimer of an alpha chain and a beta chain (beta-2-microglobulin).

Its subcellular location is the membrane. Functionally, involved in the presentation of foreign antigens to the immune system. In Gorilla gorilla gorilla (Western lowland gorilla), this protein is Class I histocompatibility antigen, Gogo-B*0101 alpha chain.